We begin with the raw amino-acid sequence, 381 residues long: Sulfate adenylyltransferase (381 aa).

This sequence belongs to the sulfate adenylyltransferase family.

It catalyses the reaction sulfate + ATP + H(+) = adenosine 5'-phosphosulfate + diphosphate. Its pathway is sulfur metabolism; hydrogen sulfide biosynthesis; sulfite from sulfate: step 1/3. This chain is Sulfate adenylyltransferase, found in Chloroflexus aurantiacus (strain ATCC 29366 / DSM 635 / J-10-fl).